The sequence spans 276 residues: Ubiquinone biosynthesis protein coq11, mitochondrial (276 aa).

This sequence belongs to the NAD(P)-dependent epimerase/dehydratase family.

Its subcellular location is the mitochondrion. Acts in the coenzyme Q biosynthetic pathway. This Schizosaccharomyces pombe (strain 972 / ATCC 24843) (Fission yeast) protein is Ubiquinone biosynthesis protein coq11, mitochondrial.